Reading from the N-terminus, the 449-residue chain is Phosphoglucosamine mutase (449 aa).

Ser-104 serves as the catalytic Phosphoserine intermediate. Mg(2+) is bound by residues Ser-104, Asp-243, Asp-245, and Asp-247. Ser-104 carries the phosphoserine modification.

This sequence belongs to the phosphohexose mutase family. Mg(2+) serves as cofactor. Post-translationally, activated by phosphorylation.

The catalysed reaction is alpha-D-glucosamine 1-phosphate = D-glucosamine 6-phosphate. Catalyzes the conversion of glucosamine-6-phosphate to glucosamine-1-phosphate. This is Phosphoglucosamine mutase from Xanthomonas euvesicatoria pv. vesicatoria (strain 85-10) (Xanthomonas campestris pv. vesicatoria).